Reading from the N-terminus, the 423-residue chain is Imidazolonepropionase (423 aa).

Fe(3+)-binding residues include His78 and His80. Positions 78 and 80 each coordinate Zn(2+). Residues Arg87, Tyr150, and His183 each coordinate 4-imidazolone-5-propanoate. Tyr150 contacts N-formimidoyl-L-glutamate. His247 is a binding site for Fe(3+). Residue His247 participates in Zn(2+) binding. Residue Glu250 participates in 4-imidazolone-5-propanoate binding. Fe(3+) is bound at residue Asp322. Asp322 serves as a coordination point for Zn(2+). N-formimidoyl-L-glutamate contacts are provided by Asn324 and Gly326. Ser327 contacts 4-imidazolone-5-propanoate.

The protein belongs to the metallo-dependent hydrolases superfamily. HutI family. Zn(2+) serves as cofactor. The cofactor is Fe(3+).

The protein localises to the cytoplasm. It catalyses the reaction 4-imidazolone-5-propanoate + H2O = N-formimidoyl-L-glutamate. It functions in the pathway amino-acid degradation; L-histidine degradation into L-glutamate; N-formimidoyl-L-glutamate from L-histidine: step 3/3. Functionally, catalyzes the hydrolytic cleavage of the carbon-nitrogen bond in imidazolone-5-propanoate to yield N-formimidoyl-L-glutamate. It is the third step in the universal histidine degradation pathway. This chain is Imidazolonepropionase, found in Bacillus cereus (strain ATCC 10987 / NRS 248).